A 278-amino-acid polypeptide reads, in one-letter code: HTH-type transcriptional activator RhaS (278 aa).

Positions 174 to 272 (NLLLAWLEDH…NWSPRDIRQG (99 aa)) constitute an HTH araC/xylS-type domain. 2 DNA-binding regions (H-T-H motif) span residues 191-212 (DAVA…KQKT) and 239-262 (VTDI…RREF).

In terms of assembly, binds DNA as a dimer.

The protein resides in the cytoplasm. Functionally, activates expression of the rhaBAD and rhaT operons. The polypeptide is HTH-type transcriptional activator RhaS (Escherichia coli O45:K1 (strain S88 / ExPEC)).